Here is a 245-residue protein sequence, read N- to C-terminus: 14-3-3 protein theta (245 aa).

Belongs to the 14-3-3 family. Homodimer, and heterodimer with other family members.

Its subcellular location is the cytoplasm. Its function is as follows. Adapter protein implicated in the regulation of a large spectrum of both general and specialized signaling pathways. Binds to a large number of partners, usually by recognition of a phosphoserine or phosphothreonine motif. Binding generally results in the modulation of the activity of the binding partner. This chain is 14-3-3 protein theta (YWHAQ), found in Gallus gallus (Chicken).